The primary structure comprises 144 residues: Succinate dehydrogenase cytochrome b560 subunit (144 aa).

3 helical membrane passes run 40–60, 84–104, and 124–144; these read IFHRITGGVLALTLCFFILIL, GFLFIAISFFLLLFIFYHLFA, and LTGYIMLGLAFLFTLIAWIIF. His-101 provides a ligand contact to heme.

Belongs to the cytochrome b560 family. As to quaternary structure, forms part of complex II containing four subunits: a 70 kDa flavoprotein (FP), a 27 kDa iron-sulfur protein (IP), a cytochrome B and a membrane-anchoring protein. Heme is required as a cofactor.

It localises to the mitochondrion inner membrane. It functions in the pathway carbohydrate metabolism; tricarboxylic acid cycle. Functionally, membrane-anchoring subunit of succinate dehydrogenase (SDH) that is involved in complex II of the mitochondrial electron transport chain and is responsible for transferring electrons from succinate to ubiquinone (coenzyme Q). This Reclinomonas americana protein is Succinate dehydrogenase cytochrome b560 subunit (SDH3).